We begin with the raw amino-acid sequence, 346 residues long: Large ribosomal subunit protein uL10 (346 aa).

The tract at residues 307-346 is disordered; it reads AAAVAKEPEKKEEVKEEEEEEEEEDHSEEDGMAGLGSLFG. Residues 321 to 337 are compositionally biased toward acidic residues; that stretch reads KEEEEEEEEEDHSEEDG.

Belongs to the universal ribosomal protein uL10 family. Part of the 50S ribosomal subunit. Forms part of the ribosomal stalk which helps the ribosome interact with GTP-bound translation factors. Forms both a pentameric L10(L12)2(L12)2 and heptameric L10(L12)2(L12)2(L12)2 complex, where L10 forms an elongated spine to which the L12 dimers bind in a sequential fashion. The proportion of heptameric complexes increases during cell growth.

Functionally, forms part of the ribosomal stalk, playing a central role in the interaction of the ribosome with GTP-bound translation factors. The polypeptide is Large ribosomal subunit protein uL10 (Methanosarcina barkeri (strain Fusaro / DSM 804)).